Consider the following 597-residue polypeptide: FERM domain-containing protein 3 (597 aa).

In terms of domain architecture, FERM spans 32 to 312 (MRCTIRLLDD…ENQAFYKYAK (281 aa)). The segment at 383 to 403 (LLPSPSEQEEELPLGEGVPLP) is disordered. Residues 531 to 551 (LLVVGLGLLLFVFPLLLLLLE) form a helical membrane-spanning segment.

As to expression, ovary-specific.

It localises to the membrane. Functionally, putative tumor suppressor gene that may be implicated in the origin and progression of lung cancer. The polypeptide is FERM domain-containing protein 3 (FRMD3) (Homo sapiens (Human)).